Here is a 307-residue protein sequence, read N- to C-terminus: Methionyl-tRNA formyltransferase (307 aa).

S110–P113 contributes to the (6S)-5,6,7,8-tetrahydrofolate binding site.

It belongs to the Fmt family.

It catalyses the reaction L-methionyl-tRNA(fMet) + (6R)-10-formyltetrahydrofolate = N-formyl-L-methionyl-tRNA(fMet) + (6S)-5,6,7,8-tetrahydrofolate + H(+). Functionally, attaches a formyl group to the free amino group of methionyl-tRNA(fMet). The formyl group appears to play a dual role in the initiator identity of N-formylmethionyl-tRNA by promoting its recognition by IF2 and preventing the misappropriation of this tRNA by the elongation apparatus. This chain is Methionyl-tRNA formyltransferase, found in Rhodococcus erythropolis (strain PR4 / NBRC 100887).